The following is a 240-amino-acid chain: MYEAVHAHPDGDATVARHAATAERYGYEGIVVRTREALDPASKSSEHADEATALRDEYGIDVVDAVEIDADNATSASGAVGNYRSDRTVVCVVGGDDGLNRFAVEEPRVDVLVRPMGGGDFNHVLAKAARDNGVHVEFDLGPLFRATGGKRVRALADLRKLREIVTYYDTPHVVSANPRSHLDLRAPREVVAAAEAVGFDAEWVREGLRAWGEIATRNRERRSEAFIEPGVRRGRYEEDG.

This sequence belongs to the eukaryotic/archaeal RNase P protein component 3 family. Consists of a catalytic RNA component and at least 4-5 protein subunits.

Its subcellular location is the cytoplasm. The catalysed reaction is Endonucleolytic cleavage of RNA, removing 5'-extranucleotides from tRNA precursor.. Its function is as follows. Part of ribonuclease P, a protein complex that generates mature tRNA molecules by cleaving their 5'-ends. This is Ribonuclease P protein component 3 from Halorubrum lacusprofundi (strain ATCC 49239 / DSM 5036 / JCM 8891 / ACAM 34).